Here is a 380-residue protein sequence, read N- to C-terminus: 3-dehydroquinate synthase (380 aa).

This sequence belongs to the archaeal-type DHQ synthase family.

It carries out the reaction 2-amino-2,3,7-trideoxy-D-lyxo-hept-6-ulosonate + NAD(+) + H2O = 3-dehydroquinate + NH4(+) + NADH + H(+). In terms of biological role, catalyzes the oxidative deamination and cyclization of 2-amino-3,7-dideoxy-D-threo-hept-6-ulosonic acid (ADH) to yield 3-dehydroquinate (DHQ), which is fed into the canonical shikimic pathway of aromatic amino acid biosynthesis. This is 3-dehydroquinate synthase from Methanosarcina acetivorans (strain ATCC 35395 / DSM 2834 / JCM 12185 / C2A).